Consider the following 91-residue polypeptide: Acylphosphatase (91 aa).

In terms of domain architecture, Acylphosphatase-like spans 5–91 (RAHLRIYGRV…EGLEGFKVVG (87 aa)). Active-site residues include arginine 20 and asparagine 38.

Belongs to the acylphosphatase family.

The catalysed reaction is an acyl phosphate + H2O = a carboxylate + phosphate + H(+). The sequence is that of Acylphosphatase (acyP) from Thermococcus kodakarensis (strain ATCC BAA-918 / JCM 12380 / KOD1) (Pyrococcus kodakaraensis (strain KOD1)).